The following is an 89-amino-acid chain: Small ribosomal subunit protein bS20 (89 aa).

Positions 1–12 are enriched in basic residues; the sequence is MANIKSAKKRAK. A disordered region spans residues 1-22; that stretch reads MANIKSAKKRAKQTIVRNERNT.

It belongs to the bacterial ribosomal protein bS20 family.

Binds directly to 16S ribosomal RNA. The chain is Small ribosomal subunit protein bS20 from Xanthomonas oryzae pv. oryzae (strain KACC10331 / KXO85).